Here is a 1643-residue protein sequence, read N- to C-terminus: Neurexin-3 (1643 aa).

The N-terminal stretch at 1–27 (MSSTLHSVFFTLKVSILLGSLLGLCLG) is a signal peptide. A Laminin G-like 1 domain is found at 28 to 202 (LEFMGLPNQW…GVQMDAEGPC (175 aa)). Residues 28-1568 (LEFMGLPNQW…EVIRESSSTT (1541 aa)) lie on the Extracellular side of the membrane. Asparagine 58 and asparagine 105 each carry an N-linked (GlcNAc...) asparagine glycan. Residues 198–235 (AEGPCGERPCENGGICFLLDGHPTCDCSTTGYGGKLCS) enclose the EGF-like 1 domain. Disulfide bonds link cysteine 202–cysteine 213, cysteine 207–cysteine 222, and cysteine 224–cysteine 234. Laminin G-like domains are found at residues 258–440 (VATF…VFKC) and 447–639 (DPIN…KSSC). 3 residues coordinate Ca(2+): aspartate 304, leucine 321, and methionine 374. Intrachain disulfides connect cysteine 404–cysteine 440, cysteine 610–cysteine 639, cysteine 647–cysteine 658, cysteine 652–cysteine 667, and cysteine 669–cysteine 679. Residues 643-680 (SAKQCDSYPCKNNAVCKDGWNRFICDCTGTGYWGRTCE) enclose the EGF-like 2 domain. Laminin G-like domains follow at residues 685 to 857 (ILSY…IDYC) and 871 to 1046 (DPVT…ERGC). Aspartate 732 and leucine 749 together coordinate Ca(2+). Asparagine 757 is a glycosylation site (N-linked (GlcNAc...) asparagine). Arginine 807 is a Ca(2+) binding site. 4 cysteine pairs are disulfide-bonded: cysteine 1018–cysteine 1046, cysteine 1053–cysteine 1064, cysteine 1058–cysteine 1073, and cysteine 1075–cysteine 1085. One can recognise an EGF-like 3 domain in the interval 1049–1086 (PSTTCQEDSCANQGVCMQQWEGFTCDCSMTSYSGNQCN). The 171-residue stretch at 1090 to 1260 (ATYIFGKSGG…NPNIKINGSV (171 aa)) folds into the Laminin G-like 6 domain. Residues aspartate 1142 and isoleucine 1159 each contribute to the Ca(2+) site. N-linked (GlcNAc...) asparagine glycosylation occurs at asparagine 1189. The Ca(2+) site is built by isoleucine 1211 and asparagine 1213. Asparagine 1257 and asparagine 1301 each carry an N-linked (GlcNAc...) asparagine glycan. Residues 1294 to 1318 (ATTTTRKNRSTASIQPTSDDLVSSA) form a disordered region. The span at 1303 to 1318 (STASIQPTSDDLVSSA) shows a compositional bias: polar residues. Residue serine 1317 is glycosylated (O-linked (Xyl...) (heparan sulfate) serine). A helical transmembrane segment spans residues 1569-1589 (GMVVGIVAAAALCILILLYAM). Over 1590-1643 (YKYRNRDEGSYQVDETRNYISNSAQSNGTLMKEKQQSSKSGHKKQKNKDREYYV) the chain is Cytoplasmic. The disordered stretch occupies residues 1611 to 1643 (NSAQSNGTLMKEKQQSSKSGHKKQKNKDREYYV).

Belongs to the neurexin family. In terms of assembly, the laminin G-like domain 2 binds to NXPH1. Specific isoforms bind to alpha-dystroglycan. The cytoplasmic C-terminal region binds to CASK. Specific isoforms bind neuroligins NLGN1, NLGN2 and NLGN3. Interacts with CLSTN3. Post-translationally, O-glycosylated; contains heparan sulfate. Heparan sulfate attachment is required for synapse development by mediating interactions with neuroligins. In terms of tissue distribution, expressed in the blood vessel walls (at protein level). Highly expressed in brain, lung, and pancreas; a lower level of expression is detectable in heart, placenta, liver, and kidney, whereas no expression can be observed in skeletal muscle. Isoform 4a is heart-specific.

Its subcellular location is the presynaptic cell membrane. In terms of biological role, neuronal cell surface protein that may be involved in cell recognition and cell adhesion. May mediate intracellular signaling. This is Neurexin-3 (NRXN3) from Homo sapiens (Human).